The chain runs to 485 residues: Glutamate--tRNA ligase (485 aa).

Residue arginine 6 participates in L-glutamate binding. A 'HIGH' region motif is present at residues 9–19; the sequence is PSPTGNLHIGT. Residues tyrosine 192 and 210 to 214 contribute to the L-glutamate site; that span reads RGEDH. The short motif at 248–252 is the 'KMSKS' region element; the sequence is KLSKR. Lysine 251 provides a ligand contact to ATP.

This sequence belongs to the class-I aminoacyl-tRNA synthetase family. Glutamate--tRNA ligase type 1 subfamily. As to quaternary structure, monomer. It depends on Does not require zinc. as a cofactor.

The protein localises to the cytoplasm. It carries out the reaction tRNA(Glu) + L-glutamate + ATP = L-glutamyl-tRNA(Glu) + AMP + diphosphate. Non-discriminating glutamyl-tRNA synthetase. Catalyzes the attachment of glutamate to tRNA(Glu) in a two-step reaction: glutamate is first activated by ATP to form Glu-AMP and then transferred to the acceptor end of tRNA(Glu). Acylates both tRNA(Glu) and tRNA(Gln) with glutamate, but has 13-fold higher efficiency with tRNA(Glu). The chain is Glutamate--tRNA ligase (gltX) from Thermosynechococcus vestitus (strain NIES-2133 / IAM M-273 / BP-1).